Here is a 155-residue protein sequence, read N- to C-terminus: Small ribosomal subunit protein uS7 (155 aa).

This sequence belongs to the universal ribosomal protein uS7 family. In terms of assembly, part of the 30S ribosomal subunit. Contacts proteins S9 and S11.

Its function is as follows. One of the primary rRNA binding proteins, it binds directly to 16S rRNA where it nucleates assembly of the head domain of the 30S subunit. Is located at the subunit interface close to the decoding center, probably blocks exit of the E-site tRNA. The chain is Small ribosomal subunit protein uS7 from Helicobacter hepaticus (strain ATCC 51449 / 3B1).